A 470-amino-acid polypeptide reads, in one-letter code: Cysteine--tRNA ligase (470 aa).

Cysteine 29 lines the Zn(2+) pocket. Residues 31–41 (PTVYNYAHIGN) carry the 'HIGH' region motif. Residues cysteine 211, histidine 236, and glutamate 240 each coordinate Zn(2+). Residues 273–277 (KMSKS) carry the 'KMSKS' region motif. Lysine 276 is a binding site for ATP.

Belongs to the class-I aminoacyl-tRNA synthetase family. Monomer. Requires Zn(2+) as cofactor.

Its subcellular location is the cytoplasm. It carries out the reaction tRNA(Cys) + L-cysteine + ATP = L-cysteinyl-tRNA(Cys) + AMP + diphosphate. This is Cysteine--tRNA ligase from Phenylobacterium zucineum (strain HLK1).